Consider the following 249-residue polypeptide: uncharacterized protein (249 aa).

The protein resides in the cytoplasm. It localises to the nucleus. This is an uncharacterized protein from Schizosaccharomyces pombe (strain 972 / ATCC 24843) (Fission yeast).